Consider the following 215-residue polypeptide: Small ribosomal subunit protein uS2 (215 aa).

Belongs to the universal ribosomal protein uS2 family.

The polypeptide is Small ribosomal subunit protein uS2 (Caldivirga maquilingensis (strain ATCC 700844 / DSM 13496 / JCM 10307 / IC-167)).